Reading from the N-terminus, the 680-residue chain is DNA-directed RNA polymerase subunit beta' (680 aa).

Zn(2+) contacts are provided by Cys-69, Cys-71, Cys-87, and Cys-90. Residues Asp-489, Asp-491, and Asp-493 each contribute to the Mg(2+) site.

The protein belongs to the RNA polymerase beta' chain family. RpoC1 subfamily. As to quaternary structure, in plastids the minimal PEP RNA polymerase catalytic core is composed of four subunits: alpha, beta, beta', and beta''. When a (nuclear-encoded) sigma factor is associated with the core the holoenzyme is formed, which can initiate transcription. The cofactor is Mg(2+). Zn(2+) serves as cofactor.

The protein resides in the plastid. It is found in the chloroplast. It carries out the reaction RNA(n) + a ribonucleoside 5'-triphosphate = RNA(n+1) + diphosphate. In terms of biological role, DNA-dependent RNA polymerase catalyzes the transcription of DNA into RNA using the four ribonucleoside triphosphates as substrates. The protein is DNA-directed RNA polymerase subunit beta' of Aethionema cordifolium (Lebanon stonecress).